A 192-amino-acid polypeptide reads, in one-letter code: UPF0301 protein Bphyt_0868 (192 aa).

It belongs to the UPF0301 (AlgH) family.

The sequence is that of UPF0301 protein Bphyt_0868 from Paraburkholderia phytofirmans (strain DSM 17436 / LMG 22146 / PsJN) (Burkholderia phytofirmans).